The following is an 83-amino-acid chain: Putative defensin-like protein 66 (83 aa).

Positions 1 to 22 are cleaved as a signal peptide; sequence MGSSRLMITFIVVAMLAISSDL. 4 disulfide bridges follow: cysteine 38–cysteine 82, cysteine 42–cysteine 65, cysteine 51–cysteine 80, and cysteine 55–cysteine 81.

It belongs to the DEFL family.

It is found in the secreted. The protein is Putative defensin-like protein 66 of Arabidopsis thaliana (Mouse-ear cress).